The chain runs to 444 residues: D(2) dopamine receptor (444 aa).

Residues 1–37 are Extracellular-facing; that stretch reads MDPLNLSWYDDDLERQNWSRPFNGSEGKADRPHYNYY. N-linked (GlcNAc...) asparagine glycosylation is found at Asn-5, Asn-17, and Asn-23. The chain crosses the membrane as a helical span at residues 38-60; that stretch reads AMLLTLLIFIIVFGNVLVCMAVS. Residues 61 to 70 lie on the Cytoplasmic side of the membrane; sequence REKALQTTTN. Residues 71 to 93 traverse the membrane as a helical segment; that stretch reads YLIVSLAVADLLVATLVMPWVVY. Residues 94-108 are Extracellular-facing; it reads LEVVGEWKFSRIHCD. Cys-107 and Cys-182 are disulfide-bonded. The chain crosses the membrane as a helical span at residues 109 to 130; that stretch reads IFVTLDVMMCTASILNLCAISI. The Cytoplasmic portion of the chain corresponds to 131–151; it reads DRYTAVAMPMLYNTRYSSKRR. The chain crosses the membrane as a helical span at residues 152 to 172; the sequence is VTVMIAIVWVLSFTISCPLLF. Residues 173–188 are Extracellular-facing; that stretch reads GLNNTDQNECIIANPA. The helical transmembrane segment at 189–213 threads the bilayer; it reads FVVYSSIVSFYVPFIVTLLVYIKIY. Positions 211–374 are interaction with PPP1R9B; the sequence is KIYIVLRKRR…SQQKEKKATQ (164 aa). The Cytoplasmic segment spans residues 214 to 374; that stretch reads IVLRKRRKRV…SQQKEKKATQ (161 aa). Residues 282 to 329 form a disordered region; that stretch reads EMLSSTSPPERTRYSPIPPSHHQLTLPDPSHHGLHSNPDSPAKPEKNG. Residues 375–396 traverse the membrane as a helical segment; sequence MLAIVLGVFIICWLPFFITHIL. Over 397 to 410 the chain is Extracellular; the sequence is NIHCDCNIPPVLYS. Cys-400 and Cys-402 are oxidised to a cystine. The helical transmembrane segment at 411–432 threads the bilayer; it reads AFTWLGYVNSAVNPIIYTTFNI. The Cytoplasmic portion of the chain corresponds to 433–444; sequence EFRKAFMKILHC. Residue Cys-444 is the site of S-palmitoyl cysteine attachment.

This sequence belongs to the G-protein coupled receptor 1 family. In terms of assembly, forms homo- and heterooligomers with DRD4. The interaction with DRD4 may modulate agonist-induced downstream signaling. Interacts with CADPS and CADPS2. Interacts with GPRASP1, PPP1R9B and CLIC6. Interacts with ARRB2. Interacts with HTR2A. Interacts with DRD1. Interacts with KCNA2. In terms of processing, palmitoylated. Palmitoylation which is required for proper localization to the plasma membrane and stability of the receptor could be carried on by ZDHHC4, ZDHHC3 and ZDHHC8. As to expression, expressed in the anterior lobe of the pituitary gland. Expressed ventral tegmental area of the midbrain and the pars compacta of the substantia nigra. Expressed seven times more than isoform short in the caudate nucleus. Expressed in the anterior lobe of the pituitary gland. Expressed in the caudate nucleus. Not expressed in the wider brain.

Its subcellular location is the cell membrane. It is found in the golgi apparatus membrane. Its function is as follows. Dopamine receptor whose activity is mediated by G proteins which inhibit adenylyl cyclase. Positively regulates postnatal regression of retinal hyaloid vessels via suppression of VEGFR2/KDR activity, downstream of OPN5. The polypeptide is D(2) dopamine receptor (Drd2) (Rattus norvegicus (Rat)).